A 587-amino-acid chain; its full sequence is Arginine--tRNA ligase (587 aa).

A 'HIGH' region motif is present at residues 127–137; sequence PNLAKEMHVGH.

This sequence belongs to the class-I aminoacyl-tRNA synthetase family. Monomer.

It is found in the cytoplasm. The catalysed reaction is tRNA(Arg) + L-arginine + ATP = L-arginyl-tRNA(Arg) + AMP + diphosphate. The polypeptide is Arginine--tRNA ligase (Pseudomonas aeruginosa (strain UCBPP-PA14)).